A 273-amino-acid polypeptide reads, in one-letter code: Fos-related antigen 1 (273 aa).

Disordered stretches follow at residues 1 to 46 (MYRD…IDSS) and 60 to 114 (GPTG…RRER). The segment covering 7 to 35 (EPGPSSGAGSPYGRPAQPPQAQAQTAQQQ) has biased composition (low complexity). The region spanning 105-168 (EERRRVRRER…ERLELVLEAH (64 aa)) is the bZIP domain. The tract at residues 107–127 (RRRVRRERNKLAAAKCRNRRK) is basic motif. Residues 133–161 (LQAETDKLEDEKSGLQREIEELQKQKERL) are leucine-zipper. Positions 169–182 (RPICKIPEGDKKDP) are enriched in basic and acidic residues. The interval 169-273 (RPICKIPEGD…PLGSPTLLAL (105 aa)) is disordered. 2 stretches are compositionally biased toward low complexity: residues 217–235 (LHTPTLMTTPSLTPFTPSL) and 254–273 (SSSSGDPSSDPLGSPTLLAL). Position 267 is a phosphoserine (serine 267).

The protein belongs to the bZIP family. Fos subfamily. In terms of assembly, heterodimer. Interacts with the BAF multiprotein chromatin-remodeling complex subunits SMARCB1 and SMARCD1. Interacts with ARID1A and JUN.

Its subcellular location is the nucleus. This is Fos-related antigen 1 (Fosl1) from Mus musculus (Mouse).